We begin with the raw amino-acid sequence, 184 residues long: Spiro-conjugate synthase (184 aa).

A disulfide bond links C57 and C184. Residue Q115 participates in (1S,3R,6R,8R,9R,11R,14S,15S,19R,20R)-8-ethyl-9,15-dihydroxy-3,4,6,20-tetramethyl-21,23-dioxo-24-azapentacyclo[20.2.1.0(1,6).0(11,20).0(14,19)]pentacosa-4,12,22(25)-trien-25-olate binding.

As to quaternary structure, homodimer.

It catalyses the reaction 4-[(1R,2R,4aS,5S,8aR)-2-[(2R,3R,5E,7E)-3-ethyl-2-hydroxy-5,7-dimethylnona-5,7-dien-1-yl]-5-hydroxy-1-methyl-1,2,4a,5,6,7,8,8a-octahydronaphthalene-1-carbonyl]-2-methylidene-5-oxo-2,5-dihydro-1H-pyrrol-3-olate = (1S,3R,6R,8R,9R,11R,14S,15S,19R,20R)-8-ethyl-9,15-dihydroxy-3,4,6,20-tetramethyl-21,23-dioxo-24-azapentacyclo[20.2.1.0(1,6).0(11,20).0(14,19)]pentacosa-4,12,22(25)-trien-25-olate. Its pathway is antibiotic biosynthesis. Functionally, involved in the biosynthesis of the spirotetramate antibiotics pyrroindomycins. Catalyzes the intramolecular cyclization forming the spiro-conjugate moiety in pyrroindomycins, via an exo-selective [4+2] cycloaddition reaction. The protein is Spiro-conjugate synthase of Streptomyces rugosporus.